Reading from the N-terminus, the 205-residue chain is Beta-crystallin B2 (205 aa).

Residue Ala2 is modified to N-acetylalanine. The tract at residues 2–16 is N-terminal arm; that stretch reads ASDHQSPATKQQQPS. Beta/gamma crystallin 'Greek key' domains follow at residues 17-56 and 57-101; these read SKIV…LVHS and GPWV…RPIK. The interval 102-106 is connecting peptide; sequence VDSQE. Beta/gamma crystallin 'Greek key' domains are found at residues 107–148 and 149–191; these read HKIV…RVQS and GTWV…RRIR. The segment at 193 to 205 is C-terminal arm; it reads MQWHQRGTFHPTN.

Belongs to the beta/gamma-crystallin family. In terms of assembly, homo/heterodimer, or complexes of higher-order. The structure of beta-crystallin oligomers seems to be stabilized through interactions between the N-terminal arms. The N-terminus is blocked.

Crystallins are the dominant structural components of the vertebrate eye lens. The polypeptide is Beta-crystallin B2 (Aquarana catesbeiana (American bullfrog)).